A 392-amino-acid chain; its full sequence is ATP phosphoribosyltransferase regulatory subunit (392 aa).

The protein belongs to the class-II aminoacyl-tRNA synthetase family. HisZ subfamily. Heteromultimer composed of HisG and HisZ subunits.

Its subcellular location is the cytoplasm. It functions in the pathway amino-acid biosynthesis; L-histidine biosynthesis; L-histidine from 5-phospho-alpha-D-ribose 1-diphosphate: step 1/9. Required for the first step of histidine biosynthesis. May allow the feedback regulation of ATP phosphoribosyltransferase activity by histidine. The chain is ATP phosphoribosyltransferase regulatory subunit from Geobacillus sp. (strain WCH70).